The sequence spans 35 residues: Cecropin-A (35 aa).

Residue leucine 35 is modified to Leucine amide.

Monomer. As to expression, hemolymph.

It is found in the secreted. Functionally, cecropins have lytic and antibacterial activity against several Gram-positive and Gram-negative bacteria. Also has activity against fungi. The protein is Cecropin-A of Heliothis virescens (Tobacco budworm moth).